The sequence spans 105 residues: uncharacterized protein (105 aa).

Positions 1-101 (MMDLGDKINP…KDIQEISAAV (101 aa)) constitute a Hcy-binding domain.

This is an uncharacterized protein from Saccharomyces cerevisiae (strain ATCC 204508 / S288c) (Baker's yeast).